Reading from the N-terminus, the 45-residue chain is uncharacterized protein (45 aa).

This is an uncharacterized protein from Archaeoglobus fulgidus (strain ATCC 49558 / DSM 4304 / JCM 9628 / NBRC 100126 / VC-16).